A 1642-amino-acid chain; its full sequence is MATDGASCEPDFSRAPEDAAGAPAEAAKKEFDVDTLSKSELRMLLSVMEGELEARDLVIEALRARRKEVFIQERYGRFNLNDPFLALQRDYEAGASDKEKKPVCTNPLSILEAVMAHCRKMQERMSTQLAAAESRQKKLEMEKLQLQALEQEHKKLAARLEEERGKNKHVVLMLVKECKQLSGKVLEEAQKLEEVMAKLEEEKKKTSALEEELATEKRRSTEMEAQMEKQLSEFDTEREQLRAKLHREEAHTADLKEEIDKMKKMIEQLKRGTDSKPGLSLPRKTKDRRSISISVATEGPMTRSVACQTDLVMESAEPVKKLPLTVPVKPAAGSPPVAAGAKGNACASAAAVRPGVERQVSHGDLIGASLPAAPPPSANRIEENGPSTGSTADLTSSPTPVPSTVSPASGHTPAPPPHSLHSPCANAPLHPGLNPRIQAARFRFQGSNANDPDQNGNTTQSPPSRDVSPTSRDNLVAKQLARNTVTQALSRFTSPPAGAPPRPGAPPTGDVGTYPPVGRTSLKTPGGARVDRGNPPPIPPKKPGLSQTPSPPHPQLKVIMDSSRASSTGIKADNKTVASPPSTLPQGSRVMNEENLSKSSSPQLPPKPSIDLTVAPAGCAVSALATSQVGAWPAETPGLNQSACSERSLVIPTTTASSSSIHPVNASSRRAGASDSLLVTASGWSPSLTPLLMSGGPAPLAGRPTLLQQAAAQGNVTLLSMLLNEEGLDINYSCEDGHSALYSAAKNGHTDCVRLLLNAEAQVNVADTNGFTPLCAAAAQGHFKCVELLIAYDANINHAADGGQTPLYLACKNGNKECIKLLLEAGTDRSVKTRDGWTPIHAAVDTGNVDSLKLLMYHRAPAHGNKLREEPGLAIFDLDQEEERHEGTSKPVVPADLINHADSEGWTAAHIAASKGFKNCLEVLCRHGGLEPERRDKCNRTAHDVATDDCKHLLENLNALKIPLRISVGEIEPGNYGADDFECENTICALNIRKQTSWDDFSKAVSQALTNHFQAISSDGWWSLEDMTFNSTTDSSIGLSASSVRSITLGTVPWSAGQSFAQSPWDFVRTNKAEQVTVLLSGPQEGCLSSVTYASMIPLQMLQNYLRLVEQYHNVIFHGPEGSLQDYIAHQLALCLKHRQMAAGFPCEIVRAEVDADFSKEQLVDLFISNACLIPVKQSPANKKIIVILENLEKSSLSELLGDFLGPLENHSTESPCTFQKGNGTSECYYFHENCFLMGTIAKACLQGSDLLVQQHFRWVQLRWDGEPMQGLLRRFLRRKVVNKFRGQVPSPCDPVCKTVDWALAVWRQLNSCLARLGTPEALLGPKYFLSCPVIPGHAQATVKWMSKLWNAVIAPRVQEAILSRASVKRQPGLGQTTKNPSQGQQAVVRAALSILLNKAVLHGCPLQRAELDQHTADFKGGSFPLSIVSSYGSCNKKKESGAWRKVSTSPRKKSGRFSSPTWNKPDLSEEGIKSNTILQLNCNRNASLSNQKSLENDLSLTLDLDQRLSLGSDDEADLVKELQSMCASKSESDISKIADSRDDLRRFDSSGNNPVFSATVNNPRMPVSQKEVSPLSSHQTTECSNSKSKTELGVSRVKSFLPVPRSKATQCSQNTKRSSSSSNTRQIEINNNSRDLEPTQK.

5 disordered regions span residues 1 to 27 (MATD…AEAA), 203 to 222 (KKKT…RSTE), 366 to 433 (IGAS…HPGL), 446 to 471 (GSNA…SPTS), and 491 to 611 (RFTS…PSID). Residues 119 to 276 (RKMQERMSTQ…EQLKRGTDSK (158 aa)) are a coiled coil. A compositionally biased stretch (polar residues) spans 385 to 394 (GPSTGSTADL). The span at 395–407 (TSSPTPVPSTVSP) shows a compositional bias: low complexity. At Arg491 the chain carries Asymmetric dimethylarginine. Pro residues predominate over residues 497-506 (AGAPPRPGAP). The span at 576 to 586 (TVASPPSTLPQ) shows a compositional bias: polar residues. 6 ANK repeats span residues 702–732 (GRPT…DINY), 736–765 (DGHS…QVNV), 769–798 (NGFT…NINH), 802–831 (GGQT…DRSV), 835–864 (DGWT…PAHG), and 904–934 (EGWT…EPER). The tract at residues 1440–1469 (ESGAWRKVSTSPRKKSGRFSSPTWNKPDLS) is disordered. Residue Ser1513 is modified to Phosphoserine. Residues 1546–1642 (RRFDSSGNNP…NSRDLEPTQK (97 aa)) form a disordered region. Polar residues-rich tracts occupy residues 1552-1563 (GNNPVFSATVNN) and 1571-1588 (KEVS…SNSK). The segment covering 1613-1627 (SQNTKRSSSSSNTRQ) has biased composition (low complexity).

As to quaternary structure, interacts with CTTN/cortactin SH3 domain. Interacts with STRN, STRN4/zinedin and MOB4/phocein; this interactions mediate the association with the STRIPAK core complex and may regulate dendritic spine distribution of the STRIPAK complex in hippocampal neurons. Activation of glutamate receptors weakens the interaction with STRN and STRN4.

Its subcellular location is the cytoplasm. The protein localises to the cell cortex. It localises to the cell projection. It is found in the dendritic spine. Functionally, regulates the dendritic spine distribution of CTTN/cortactin in hippocampal neurons, and thus controls dendritic spinogenesis and dendritic spine maintenance. Associates with the striatin-interacting phosphatase and kinase (STRIPAK) core complex to regulate dendritic spine distribution of the STRIPAK complex in hippocampal neurons. In Muntiacus reevesi (Reeves' muntjac), this protein is Cortactin-binding protein 2 (CTTNBP2).